Consider the following 166-residue polypeptide: NADH-quinone oxidoreductase subunit I (166 aa).

2 consecutive 4Fe-4S ferredoxin-type domains span residues leucine 57–glutamate 87 and threonine 97–isoleucine 126. The [4Fe-4S] cluster site is built by cysteine 67, cysteine 70, cysteine 73, cysteine 77, cysteine 106, cysteine 109, cysteine 112, and cysteine 116.

Belongs to the complex I 23 kDa subunit family. As to quaternary structure, NDH-1 is composed of 14 different subunits. Subunits NuoA, H, J, K, L, M, N constitute the membrane sector of the complex. It depends on [4Fe-4S] cluster as a cofactor.

The protein resides in the cell inner membrane. The catalysed reaction is a quinone + NADH + 5 H(+)(in) = a quinol + NAD(+) + 4 H(+)(out). In terms of biological role, NDH-1 shuttles electrons from NADH, via FMN and iron-sulfur (Fe-S) centers, to quinones in the respiratory chain. The immediate electron acceptor for the enzyme in this species is believed to be ubiquinone. Couples the redox reaction to proton translocation (for every two electrons transferred, four hydrogen ions are translocated across the cytoplasmic membrane), and thus conserves the redox energy in a proton gradient. This is NADH-quinone oxidoreductase subunit I from Legionella pneumophila (strain Lens).